A 689-amino-acid chain; its full sequence is DNA topoisomerase 1 (689 aa).

Residues 3-113 form the Toprim domain; that stretch reads DNLVIVESPA…KENRVVFNEI (111 aa). Residues E9 and D82 each coordinate Mg(2+). The region spanning 129–557 is the Topo IA-type catalytic domain; it reads EMNLVDAQQA…FFSSFKQDVE (429 aa). Positions 163–168 are interaction with DNA; the sequence is SAGRVQ. Residue Y298 is the O-(5'-phospho-DNA)-tyrosine intermediate of the active site. The tract at residues 328-357 is disordered; that stretch reads SKRKASGKQGDQDAHEAIRPSSTMRTPDDM. 3 C4-type zinc fingers span residues 577 to 603, 617 to 645, and 658 to 681; these read CEVCGSPMVIKMGRYGKFMACSNFPDC, CPKCNDGDVVERKSKKNRVFYGCSKYPEC, and CPKCNQYLVENKKGKTTQVICSNC.

This sequence belongs to the type IA topoisomerase family. In terms of assembly, monomer. Mg(2+) serves as cofactor.

It catalyses the reaction ATP-independent breakage of single-stranded DNA, followed by passage and rejoining.. In terms of biological role, releases the supercoiling and torsional tension of DNA, which is introduced during the DNA replication and transcription, by transiently cleaving and rejoining one strand of the DNA duplex. Introduces a single-strand break via transesterification at a target site in duplex DNA. The scissile phosphodiester is attacked by the catalytic tyrosine of the enzyme, resulting in the formation of a DNA-(5'-phosphotyrosyl)-enzyme intermediate and the expulsion of a 3'-OH DNA strand. The free DNA strand then undergoes passage around the unbroken strand, thus removing DNA supercoils. Finally, in the religation step, the DNA 3'-OH attacks the covalent intermediate to expel the active-site tyrosine and restore the DNA phosphodiester backbone. This chain is DNA topoisomerase 1, found in Staphylococcus aureus.